The following is a 1687-amino-acid chain: Genome polyprotein (1687 aa).

Polar residues predominate over residues 1-13 (MRMATPSSAPSVR). The segment at 1 to 56 (MRMATPSSAPSVRNTEKRKNKKASSKASVSFGAPSPLSSESEDEINYMTPPEQEAQ) is disordered. The segment at 1–116 (MRMATPSSAP…FRRYPHLRPK (116 aa)) is interaction with host MAP1LC3A/LC3. The segment at 117 to 341 (EDRPDAPSHA…ISIFGEWQAE (225 aa)) is interaction with NTPase. The segment at 244-341 (SPVQDWNVDP…ISIFGEWQAE (98 aa)) is interaction with NS4. Host ER membrane association regions lie at residues 261-292 (KLRM…KPLN) and 302-341 (WTFS…WQAE). The interaction with NS1-2, NS4 and homooligomerization stretch occupies residues 342–518 (GPFDLALDVV…GKTCFCQNLA (177 aa)). Residues 476–641 (RISMARAAFE…DDARARAPGD (166 aa)) form the SF3 helicase domain. ATP is bound at residue 504–511 (GRPGIGKT). The interval 595-700 (VIIITTNQQT…AVALVHERHD (106 aa)) is important for mitochondrion targeting. The interval 893 to 898 (DEEYDE) is acidic. Tyr-896 carries the post-translational modification O-(5'-phospho-RNA)-tyrosine. Positions 978-994 (WADDDRQVDYGEKINFE) are interaction with host EIF4G. The Peptidase C37 domain occupies 995 to 1172 (APVSIWSRVV…AATHGEPTLE (178 aa)). Catalysis depends on for 3CLpro activity residues His-1024, Asp-1048, and Cys-1133. Residues 1416 to 1537 (RYHMDADYTR…STNLELDMVK (122 aa)) form the RdRp catalytic domain. Mg(2+)-binding residues include Asp-1420 and Asp-1422. A disulfide bond links Cys-1482 and Cys-1484. 3 residues coordinate Mg(2+): Asp-1524, Glu-1525, and Ser-1569.

In terms of assembly, homodimer. Interacts with NTPase; this interaction increases the proapoptotic activity of the NTPase and is crucial for the formation of the viral replication complex. Interacts with NS4; this interaction is crucial for the formation of the viral replication complex. Interacts (via N-terminus) with host VAPA. Interacts with host VAPB. Monomer. As to quaternary structure, homooligomer. Interacts with NS1-2; this interaction increases the proapoptotic activity of the NTPase and is crucial for the formation of the viral replication complex. Interacts with NS4; this interaction increases the proapoptotic activity of the NTPase. Interacts with host G3BP1; this interaction leads to the redistribution of G3BP1 and its cellular partners to the viral replication complexes, thereby preventing the assembly of stress granules. In terms of assembly, homodimer. Monomer; in solution. Interacts with NTPase; this interaction increases the proapoptotic activity of the NTPase. Interacts with NS1-2; this interaction is crucial for the formation of the viral replication complex. As to quaternary structure, monomer. Interacts with the RNA-directed RNA polymerase; this interaction induces the multimerization of the RdRp and enhances its activity. Interacts with host IEF4E; this interaction plays a role in translation of viral proteins. Interacts (via C-terminus) with host IEF4G1 (via central domain); this interaction plays a role in translation of viral proteins. In terms of assembly, homohexamer; also forms fibrous hexameric oligomer. Interacts with the viral genome-linked protein; this interaction induces the multimerization of the RdRp and enhances its activity. Requires Mg(2+) as cofactor. The cofactor is Mn(2+). Specific enzymatic cleavages in vivo yield mature proteins. 3CLpro is first autocatalytically cleaved, then processes the whole polyprotein. Post-translationally, cleaved by host CASP3/caspase 3 at 18-22 h.p.i. The cleavage allows NS1 secretion, which is essential for intestinal infection and resistance to IFN-lambda. In terms of processing, VPg is uridylylated by the polymerase and is covalently attached to the 5'-end of the polyadenylated genomic and subgenomic RNAs. This uridylylated form acts as a nucleotide-peptide primer for the polymerase.

It is found in the host endoplasmic reticulum membrane. Its subcellular location is the secreted. The protein resides in the host endosome membrane. It localises to the host mitochondrion. The protein localises to the host cytoplasm. It is found in the host perinuclear region. The catalysed reaction is a ribonucleoside 5'-triphosphate + H2O = a ribonucleoside 5'-diphosphate + phosphate + H(+). The enzyme catalyses Endopeptidase with a preference for cleavage when the P1 position is occupied by Glu-|-Xaa and the P1' position is occupied by Gly-|-Yaa.. It carries out the reaction RNA(n) + a ribonucleoside 5'-triphosphate = RNA(n+1) + diphosphate. Its activity is regulated as follows. Inhibited by Suramin, Suramin-related compounds and NF023. Inhibited by PPNDS. Its function is as follows. Induces the proliferation of the host smooth ER membranes forming long tubular structures. These remodeled membranes probably form the viral factories that contain the replication complex. May play a role in viral replication by interacting with host VAPA, a vesicle-associated membrane protein that plays a role in SNARE-mediated vesicle fusion. This interaction may target replication complex to intracellular membranes. In terms of biological role, promotes intestinal tropism and persistent fecal shedding in strain CR6. This function requires Glu-94 and is present in persistant strains. Displays NTPase activity, but probably no helicase activity. Displays RNA chaperone-like activity and destabilizes dsRNA. Induces the formation of convoluted membranes derived from the host ER. These remodeled membranes probably form the viral factories that contain the replication complex. Initiates host cell death by targeting the mitochondrial outer membrane, leading to the permeabilization of mitochondria, programmed host cell death and viral egress. Externalization of host cardiolipin seems to be involved in the process. Probably plays a role in preventing the assembly of host stress granules. Functionally, probable key protein responsible for the formation of membrane alterations by the virus. Induces the formation of convoluted membranes derived from the host ER. These remodeled membranes probably form the viral factories that contain the replication complex. May play a role in targeting replication complex to intracellular membranes. Its function is as follows. Viral genome-linked protein is covalently linked to the 5'-end of the positive-strand, negative-strand genomic RNAs and subgenomic RNA. Acts as a genome-linked replication primer. May recruit ribosome to viral RNA thereby promoting viral proteins translation. Interacts with host translation initiation complex to allow the translation of viral proteins. Induces the formation of aggregates of RNA-directed RNA polymerase in the presence of RNA. Through its interaction with the viral RNA-directed RNA polymerase, plays a crucial role in enhancing the polymerase activity. In terms of biological role, processes the polyprotein. 3CLpro-RdRp is first released by autocleavage, then all other proteins are cleaved. May cleave host polyadenylate-binding protein thereby inhibiting cellular translation. Does not cleave host G3BP1. Replicates genomic and antigenomic RNA by recognizing replications specific signals. Also transcribes a subgenomic mRNA by initiating RNA synthesis internally on antigenomic RNA. This sgRNA codes for structural proteins. Catalyzes the covalent attachment VPg with viral RNAs. The chain is Genome polyprotein from Norovirus (isolate Mouse/NoV/United States/MNV1/2002/GV) (MNV-1).